A 638-amino-acid chain; its full sequence is Phosphomethylpyrimidine synthase (638 aa).

Substrate-binding positions include N233, M262, Y291, H327, 347–349 (SRG), 388–391 (DGLR), and E427. H431 is a Zn(2+) binding site. Residue Y454 participates in substrate binding. Residue H495 participates in Zn(2+) binding. The [4Fe-4S] cluster site is built by C575, C578, and C583.

The protein belongs to the ThiC family. As to quaternary structure, homodimer. Requires [4Fe-4S] cluster as cofactor.

It catalyses the reaction 5-amino-1-(5-phospho-beta-D-ribosyl)imidazole + S-adenosyl-L-methionine = 4-amino-2-methyl-5-(phosphooxymethyl)pyrimidine + CO + 5'-deoxyadenosine + formate + L-methionine + 3 H(+). It participates in cofactor biosynthesis; thiamine diphosphate biosynthesis. Functionally, catalyzes the synthesis of the hydroxymethylpyrimidine phosphate (HMP-P) moiety of thiamine from aminoimidazole ribotide (AIR) in a radical S-adenosyl-L-methionine (SAM)-dependent reaction. The sequence is that of Phosphomethylpyrimidine synthase from Saccharophagus degradans (strain 2-40 / ATCC 43961 / DSM 17024).